An 89-amino-acid polypeptide reads, in one-letter code: Dynein light chain 2, cytoplasmic (89 aa).

This sequence belongs to the dynein light chain family. Homodimer. The cytoplasmic dynein 1 complex consists of two catalytic heavy chains (HCs) and a number of non-catalytic subunits which present intermediate chains (ICs), light intermediate chains (LICs) and light chains (LCs); the composition seems to vary in respect to the IC, LIC and LC composition. The heavy chain homodimer serves as a scaffold for the probable homodimeric assembly of the respective non-catalytic subunits. Dynein ICs and LICs bind directly to the HC dimer and the LCs assemble on the IC dimer. Interacts with DYNC1I1. Interacts with BMF. Component of the myosin V motor complex. Interacts with BCAS1. Interacts with Basson/BSN. Interacts with AMBRA1 (via TQT motifs); tethering AMBRA1 to the cytoskeleton. Interacts with IQUB.

Its subcellular location is the cytoplasm. It is found in the cytoskeleton. In terms of biological role, acts as one of several non-catalytic accessory components of the cytoplasmic dynein 1 complex that are thought to be involved in linking dynein to cargos and to adapter proteins that regulate dynein function. Cytoplasmic dynein 1 acts as a motor for the intracellular retrograde motility of vesicles and organelles along microtubules. May play a role in changing or maintaining the spatial distribution of cytoskeletal structures. This is Dynein light chain 2, cytoplasmic (DYNLL2) from Homo sapiens (Human).